A 105-amino-acid chain; its full sequence is Thioredoxin (105 aa).

Residues 2–105 form the Thioredoxin domain; the sequence is VKQIESKSAF…KLEATINELL (104 aa). At K3 the chain carries N6-acetyllysine. K8 is subject to N6-succinyllysine. Active-site nucleophile residues include C32 and C35. C32 and C35 form a disulfide bridge. An N6-acetyllysine modification is found at K39. Residues C62 and C69 each carry the S-nitrosocysteine modification. The residue at position 73 (C73) is an S-nitrosocysteine; alternate. An N6-acetyllysine; alternate modification is found at K94. Position 94 is an N6-succinyllysine; alternate (K94).

This sequence belongs to the thioredoxin family. In terms of assembly, homodimer; disulfide-linked. Interacts with TXNIP through the redox-active site. Interacts with MAP3K5 and CASP3. Interacts with APEX1; the interaction stimulates the FOS/JUN AP-1 DNA-binding activity in a redox-dependent manner. In terms of processing, in the fully reduced protein, both Cys-69 and Cys-73 are nitrosylated in response to nitric oxide (NO). When two disulfide bonds are present in the protein, only Cys-73 is nitrosylated. Cys-73 can serve as donor for nitrosylation of target proteins.

The protein localises to the nucleus. It is found in the cytoplasm. The protein resides in the secreted. Its function is as follows. Participates in various redox reactions through the reversible oxidation of its active center dithiol to a disulfide and catalyzes dithiol-disulfide exchange reactions. Plays a role in the reversible S-nitrosylation of cysteine residues in target proteins, and thereby contributes to the response to intracellular nitric oxide. Nitrosylates the active site Cys of CASP3 in response to nitric oxide (NO), and thereby inhibits caspase-3 activity. Induces the FOS/JUN AP-1 DNA binding activity in ionizing radiation (IR) cells through its oxidation/reduction status and stimulates AP-1 transcriptional activity. The chain is Thioredoxin (TXN) from Oryctolagus cuniculus (Rabbit).